The primary structure comprises 226 residues: MTARIGVVTFPGSLDDRDTQRAIRVAGAEPVALWHKDKDLKQVDAVVLCGGFSYGDYLRAGAIARFSPVMDTVIDQAKAGLPVLGICNGFQILTEAHLLPGGMLGNDHLHFICRDQKLRVENADTSWTSDYTAGQEIHIPLKNMDGRYVADRRTLDELEAEGRVAFRYLDMNPNGSLNDIAGITNAAGNVVGLMPHPEHAVESLIGTGRTDGLPFFTSILKKLVNA.

The Glutamine amidotransferase type-1 domain maps to 4 to 226 (RIGVVTFPGS…TSILKKLVNA (223 aa)). Cysteine 87 (nucleophile) is an active-site residue. Residues histidine 196 and glutamate 198 contribute to the active site.

Part of the FGAM synthase complex composed of 1 PurL, 1 PurQ and 2 PurS subunits.

Its subcellular location is the cytoplasm. It catalyses the reaction N(2)-formyl-N(1)-(5-phospho-beta-D-ribosyl)glycinamide + L-glutamine + ATP + H2O = 2-formamido-N(1)-(5-O-phospho-beta-D-ribosyl)acetamidine + L-glutamate + ADP + phosphate + H(+). The catalysed reaction is L-glutamine + H2O = L-glutamate + NH4(+). It functions in the pathway purine metabolism; IMP biosynthesis via de novo pathway; 5-amino-1-(5-phospho-D-ribosyl)imidazole from N(2)-formyl-N(1)-(5-phospho-D-ribosyl)glycinamide: step 1/2. In terms of biological role, part of the phosphoribosylformylglycinamidine synthase complex involved in the purines biosynthetic pathway. Catalyzes the ATP-dependent conversion of formylglycinamide ribonucleotide (FGAR) and glutamine to yield formylglycinamidine ribonucleotide (FGAM) and glutamate. The FGAM synthase complex is composed of three subunits. PurQ produces an ammonia molecule by converting glutamine to glutamate. PurL transfers the ammonia molecule to FGAR to form FGAM in an ATP-dependent manner. PurS interacts with PurQ and PurL and is thought to assist in the transfer of the ammonia molecule from PurQ to PurL. This chain is Phosphoribosylformylglycinamidine synthase subunit PurQ, found in Streptomyces coelicolor (strain ATCC BAA-471 / A3(2) / M145).